A 406-amino-acid chain; its full sequence is Phosphoglycerate kinase (406 aa).

Substrate-binding positions include 22 to 24 (DLN), Arg-37, 60 to 63 (HLGN), Arg-119, and Arg-152. ATP contacts are provided by residues Lys-202, Glu-325, and 355–358 (GGDT).

This sequence belongs to the phosphoglycerate kinase family. In terms of assembly, monomer.

The protein resides in the cytoplasm. The enzyme catalyses (2R)-3-phosphoglycerate + ATP = (2R)-3-phospho-glyceroyl phosphate + ADP. It participates in carbohydrate degradation; glycolysis; pyruvate from D-glyceraldehyde 3-phosphate: step 2/5. This is Phosphoglycerate kinase from Orientia tsutsugamushi (strain Ikeda) (Rickettsia tsutsugamushi).